Reading from the N-terminus, the 423-residue chain is tRNA-dihydrouridine(16/17) synthase [NAD(P)(+)] (423 aa).

T2 bears the N-acetylthreonine mark. FMN contacts are provided by residues 35 to 37 (PMV) and Q92. C121 functions as the Proton donor in the catalytic mechanism. FMN-binding positions include K160, H188, 223–225 (NGN), and 247–248 (AE). The tract at residues 404-423 (KKRKADVPLESADKKKDVKA) is disordered. Over residues 408–423 (ADVPLESADKKKDVKA) the composition is skewed to basic and acidic residues.

It belongs to the Dus family. Dus1 subfamily. Monomer. FMN serves as cofactor.

It catalyses the reaction 5,6-dihydrouridine(16) in tRNA + NADP(+) = uridine(16) in tRNA + NADPH + H(+). The catalysed reaction is 5,6-dihydrouridine(16) in tRNA + NAD(+) = uridine(16) in tRNA + NADH + H(+). The enzyme catalyses 5,6-dihydrouridine(17) in tRNA + NAD(+) = uridine(17) in tRNA + NADH + H(+). It carries out the reaction 5,6-dihydrouridine(17) in tRNA + NADP(+) = uridine(17) in tRNA + NADPH + H(+). It catalyses the reaction a 5,6-dihydrouridine in mRNA + NAD(+) = a uridine in mRNA + NADH + H(+). The catalysed reaction is a 5,6-dihydrouridine in mRNA + NADP(+) = a uridine in mRNA + NADPH + H(+). Its function is as follows. Catalyzes the synthesis of dihydrouridine, a modified base found in the D-loop of most tRNAs. Specifically modifies U16 and U17 in cytoplasmic tRNAs. Also able to mediate dihydrouridylation of some mRNAs, thereby affecting their translation. This chain is tRNA-dihydrouridine(16/17) synthase [NAD(P)(+)], found in Saccharomyces cerevisiae (strain ATCC 204508 / S288c) (Baker's yeast).